Here is a 448-residue protein sequence, read N- to C-terminus: Methylenetetrahydrofolate--tRNA-(uracil-5-)-methyltransferase TrmFO (448 aa).

13–18 (GAGLAG) is a binding site for FAD.

Belongs to the MnmG family. TrmFO subfamily. The cofactor is FAD.

It is found in the cytoplasm. The catalysed reaction is uridine(54) in tRNA + (6R)-5,10-methylene-5,6,7,8-tetrahydrofolate + NADH + H(+) = 5-methyluridine(54) in tRNA + (6S)-5,6,7,8-tetrahydrofolate + NAD(+). The enzyme catalyses uridine(54) in tRNA + (6R)-5,10-methylene-5,6,7,8-tetrahydrofolate + NADPH + H(+) = 5-methyluridine(54) in tRNA + (6S)-5,6,7,8-tetrahydrofolate + NADP(+). Catalyzes the folate-dependent formation of 5-methyl-uridine at position 54 (M-5-U54) in all tRNAs. The polypeptide is Methylenetetrahydrofolate--tRNA-(uracil-5-)-methyltransferase TrmFO (Streptococcus pyogenes serotype M1).